The primary structure comprises 1055 residues: Cellulose synthase A catalytic subunit 9 [UDP-forming] (1055 aa).

The Cytoplasmic segment spans residues 1-268 (MEASAGLVAG…ASSKVNPYRM (268 aa)). Zn(2+) is bound by residues C37, C40, C56, C59, C64, C67, C79, and C82. The segment at 37–83 (CEICGDEVGRTVDGDLFVACNECGFPVCRPCYEYERREGTQNCPQCK) adopts an RING-type; degenerate zinc-finger fold. A helical transmembrane segment spans residues 269-289 (VIILRLVVLGFFLRYRILHPV). Residues 290–291 (PD) lie on the Extracellular side of the membrane. The helical transmembrane segment at 292–312 (AIPLWLTSIICEIWFAVSWIL) threads the bilayer. The Cytoplasmic portion of the chain corresponds to 313-831 (DQFPKWYPID…LERFSYINTT (519 aa)). UDP-alpha-D-glucose contacts are provided by S351, K357, E358, and D387. D387 is a catalytic residue. Residues 439–468 (NFVQERRAMKREYEEFKVRINALVAKAQKV) are a coiled coil. A UDP-alpha-D-glucose-binding site is contributed by K528. Mn(2+) is bound by residues K529 and D553. The active site involves D753. The helical transmembrane segment at 832–852 (IYPFTSLPLLAYCTLPAVCLL) threads the bilayer. At 853–860 (TGKFIMPP) the chain is on the extracellular side. The chain crosses the membrane as a helical span at residues 861–881 (ISTFASLFFIALFISIFATGI). Residues 882–899 (LEMRWSGVSIEEWWRNEQ) are Cytoplasmic-facing. Residues 900 to 920 (FWVIGGVSAHLFAVVQGLLKV) form a helical membrane-spanning segment. At 921–951 (LAGIDTNFTVTSKATGDEDDEFAELYAFKWT) the chain is on the extracellular side. A glycan (N-linked (GlcNAc...) asparagine) is linked at N927. The chain crosses the membrane as a helical span at residues 952-972 (TLLIPPTTLLILNIIGVVAGV). Topologically, residues 973-983 (SDAINNGSEAW) are cytoplasmic. A helical membrane pass occupies residues 984–1004 (GPLFGKLFFAFWVIVHLYPFL). The Extracellular portion of the chain corresponds to 1005–1013 (KGLMGRQNR). Residues 1014–1034 (TPTIVVIWSVLLASIFSLLWV) traverse the membrane as a helical segment. The Cytoplasmic portion of the chain corresponds to 1035-1055 (RIDPFTIKARGPDVRQCGINC).

It belongs to the glycosyltransferase 2 family. Plant cellulose synthase subfamily. Mn(2+) is required as a cofactor. It depends on Zn(2+) as a cofactor.

It is found in the cell membrane. The enzyme catalyses [(1-&gt;4)-beta-D-glucosyl](n) + UDP-alpha-D-glucose = [(1-&gt;4)-beta-D-glucosyl](n+1) + UDP + H(+). It participates in glycan metabolism; plant cellulose biosynthesis. Its function is as follows. Catalytic subunit of cellulose synthase terminal complexes ('rosettes'), required for beta-1,4-glucan microfibril crystallization, a major mechanism of the cell wall formation. Involved in the secondary cell wall formation. This chain is Cellulose synthase A catalytic subunit 9 [UDP-forming] (CESA9), found in Oryza sativa subsp. indica (Rice).